The chain runs to 369 residues: uncharacterized protein (369 aa).

Positions 1–35 (MQTNNPSYFFRSESALQDEKRKEEKSHNPNGNPRN) are disordered. Residues 17–27 (QDEKRKEEKSH) show a composition bias toward basic and acidic residues. WD repeat units follow at residues 83 to 127 (GHSG…CVET), 130 to 169 (GHTD…SRLL), 174 to 213 (GHSR…GSQL), 220 to 260 (GHQS…HEET), 263 to 301 (EHPD…VKDI), and 304 to 341 (GHYE…DNNE).

This is an uncharacterized protein from Schizosaccharomyces pombe (strain 972 / ATCC 24843) (Fission yeast).